A 182-amino-acid chain; its full sequence is Large ribosomal subunit protein uL5 (182 aa).

The protein belongs to the universal ribosomal protein uL5 family. As to quaternary structure, part of the 50S ribosomal subunit; part of the 5S rRNA/L5/L18/L25 subcomplex. Contacts the 5S rRNA and the P site tRNA. Forms a bridge to the 30S subunit in the 70S ribosome.

Functionally, this is one of the proteins that bind and probably mediate the attachment of the 5S RNA into the large ribosomal subunit, where it forms part of the central protuberance. In the 70S ribosome it contacts protein S13 of the 30S subunit (bridge B1b), connecting the 2 subunits; this bridge is implicated in subunit movement. Contacts the P site tRNA; the 5S rRNA and some of its associated proteins might help stabilize positioning of ribosome-bound tRNAs. This Mycoplasma mobile (strain ATCC 43663 / 163K / NCTC 11711) (Mesomycoplasma mobile) protein is Large ribosomal subunit protein uL5.